Reading from the N-terminus, the 506-residue chain is MGINDNGIYGSLKGNSTTGGIYKMGDHNTGYGEKNNQNNNNKSGGKTIVNGVIVNSNQQKLKGDENEFDHSQDDNADEFNKFPKKVKYNDLLYSVLFAIQMVLFITMTVIAGTKHPNKKEFVEYSLQGLLIIAISIPLILAFFLIWKKIFKIHPTNMIKTSFFSLMITGILFIGLLIGNGWYSWAIVFGITLISLIFFYFAFRDKIPFVGIIISLVLKIIEKYPSTLLVSFVCLIISCVYYNIWLFSVSYNFYYDSYWTAWSYMKFMFLVFNLYWTHYVITYTCYSVVSGLVASWYFFADEDFNGMPPKPCAHSLYRSMTSSFGSIAFGSLLVCLVQMVQFICRGFARVPGLTSLFCNCLQFIALIFTRMLYTFNIYTFSMVSIYGQSFCNSSKKTYNLMVNNNEKLFATHNYMLITMLSVSLSMFLIIGFIVTMIMATIQLENQGWLYVQLVMFLFILYKPFDIIFSSVLTILMCLISDPNAMEVTKPNTFILLSETYDFKSLNP.

Asn-15 and Asn-41 each carry an N-linked (GlcNAc...) asparagine glycan. Transmembrane regions (helical) follow at residues 91 to 111 (LLYS…TVIA), 126 to 146 (LQGL…FLIW), 161 to 181 (SFFS…GNGW), 182 to 202 (YSWA…YFAF), 226 to 246 (TLLV…IWLF), 256 to 276 (SYWT…LYWT), 279 to 299 (VITY…YFFA), 323 to 343 (FGSI…QFIC), 345 to 367 (GFAR…ALIF), 371 to 393 (LYTF…CNSS), 416 to 436 (ITML…VTMI), and 447 to 467 (WLYV…DIIF).

The protein belongs to the CTL (choline transporter-like) family.

It localises to the membrane. This Dictyostelium discoideum (Social amoeba) protein is CTL-like protein DDB_G0269978.